A 382-amino-acid polypeptide reads, in one-letter code: Succinyl-diaminopimelate desuccinylase (382 aa).

Histidine 68 is a Zn(2+) binding site. The active site involves aspartate 70. Residue aspartate 101 coordinates Zn(2+). Glutamate 135 acts as the Proton acceptor in catalysis. Glutamate 136, glutamate 164, and histidine 350 together coordinate Zn(2+).

It belongs to the peptidase M20A family. DapE subfamily. As to quaternary structure, homodimer. Requires Zn(2+) as cofactor. It depends on Co(2+) as a cofactor.

The catalysed reaction is N-succinyl-(2S,6S)-2,6-diaminopimelate + H2O = (2S,6S)-2,6-diaminopimelate + succinate. It functions in the pathway amino-acid biosynthesis; L-lysine biosynthesis via DAP pathway; LL-2,6-diaminopimelate from (S)-tetrahydrodipicolinate (succinylase route): step 3/3. Functionally, catalyzes the hydrolysis of N-succinyl-L,L-diaminopimelic acid (SDAP), forming succinate and LL-2,6-diaminopimelate (DAP), an intermediate involved in the bacterial biosynthesis of lysine and meso-diaminopimelic acid, an essential component of bacterial cell walls. The protein is Succinyl-diaminopimelate desuccinylase of Acidithiobacillus ferrooxidans (strain ATCC 23270 / DSM 14882 / CIP 104768 / NCIMB 8455) (Ferrobacillus ferrooxidans (strain ATCC 23270)).